A 254-amino-acid polypeptide reads, in one-letter code: MASAGGDECEGAAPEADRPHQRPFLIGVSGGTASGKSTVCEKIMGLLGQNEVEQRQRKVVILSQDRFYKVLTAEQKAKALKGQYNFDHPDAFDNDLMHRTLKNIVEGKTVEVPTYDFVTHSSQEIRDMFHLRLFVDTDSDVRLSRRVLRDVRRGRDLEQILTQYTTFVKPAFEEFCLPTKKYADVIIPRGVDNMVAINLIVQHIQDILNGDICKWHRGGSNGRSYKRTFSEPGDHPGMLTSGKRSHLESSSRPH.

A disordered region spans residues 1–29; it reads MASAGGDECEGAAPEADRPHQRPFLIGVS. ATP is bound at residue 30 to 38; it reads GGTASGKST. Substrate is bound by residues Asp-87, Tyr-115, His-120, Arg-146, Arg-155, and Gln-163. ATP is bound at residue Asp-192. A disordered region spans residues 224-254; sequence SYKRTFSEPGDHPGMLTSGKRSHLESSSRPH. A Phosphothreonine modification is found at Thr-228. Phosphoserine is present on Ser-230. The span at 245–254 shows a compositional bias: basic and acidic residues; that stretch reads SHLESSSRPH.

Belongs to the uridine kinase family.

The enzyme catalyses uridine + ATP = UMP + ADP + H(+). It catalyses the reaction cytidine + ATP = CMP + ADP + H(+). Its pathway is pyrimidine metabolism; CTP biosynthesis via salvage pathway; CTP from cytidine: step 1/3. It participates in pyrimidine metabolism; UMP biosynthesis via salvage pathway; UMP from uridine: step 1/1. Functionally, phosphorylates uridine and cytidine to uridine monophosphate and cytidine monophosphate. Does not phosphorylate deoxyribonucleosides or purine ribonucleosides. Can use ATP or GTP as a phosphate donor. The sequence is that of Uridine-cytidine kinase 1 (UCK1) from Macaca fascicularis (Crab-eating macaque).